Reading from the N-terminus, the 362-residue chain is MKASLRLRLDQLCDRHEELTALLADAEVISDNKRFRKLSREHSDLTEITEVWGKYRQAEEDIETAEMMKSDPDFKDMAEEEIQANKALLEELESQLNILMIPKDPNDSNAAYLEIRAGTGGDEAAIFSGDLFRMYSKYAESQGWRIEVLSENEGEHGGFKEVICRVDGDGVYGRLKFESGAHRVQRVPATESQGRVHTSACTVAILPEIDVDTNVEINPADLRIDTYRASGAGGQHINKTDSAVRITHIPTGTVVECQEERSQHKNKAKAMALLVSRLENAKRAAADAATSEMRRDLVGSGDRSERIRTYNYPQGRMTDHRINLTLYKLDAIMEGDLTELLDSLHREYQADQLAMLAQENGG.

Gln235 carries the N5-methylglutamine modification.

It belongs to the prokaryotic/mitochondrial release factor family. In terms of processing, methylated by PrmC. Methylation increases the termination efficiency of RF1.

It is found in the cytoplasm. Functionally, peptide chain release factor 1 directs the termination of translation in response to the peptide chain termination codons UAG and UAA. This is Peptide chain release factor 1 from Acinetobacter baumannii (strain ACICU).